We begin with the raw amino-acid sequence, 526 residues long: Putative D-lactate dehydrogenase C713.03, mitochondrial (526 aa).

The 180-residue stretch at 93 to 272 (YRGKTQLALK…TKLSVICPKR (180 aa)) folds into the FAD-binding PCMH-type domain.

The protein belongs to the FAD-binding oxidoreductase/transferase type 4 family. Requires FAD as cofactor.

The protein resides in the mitochondrion matrix. The catalysed reaction is (R)-lactate + 2 Fe(III)-[cytochrome c] = 2 Fe(II)-[cytochrome c] + pyruvate + 2 H(+). This chain is Putative D-lactate dehydrogenase C713.03, mitochondrial, found in Schizosaccharomyces pombe (strain 972 / ATCC 24843) (Fission yeast).